The sequence spans 55 residues: MAKSGRDKIKLESTAGTGHFYTTTKNKRTTPEKMSIIKFDPKVRKHVEYKETKIK.

Residues methionine 1–leucine 11 are compositionally biased toward basic and acidic residues. The segment at methionine 1–lysine 27 is disordered. Residues threonine 14–threonine 24 are compositionally biased toward polar residues.

Belongs to the bacterial ribosomal protein bL33 family.

The chain is Large ribosomal subunit protein bL33 from Herminiimonas arsenicoxydans.